The sequence spans 120 residues: NADH-ubiquinone oxidoreductase chain 3 (120 aa).

3 helical membrane passes run 8–28 (YFIL…ISLL), 63–83 (FYLV…LFPW), and 90–110 (ISYF…IGFI).

Belongs to the complex I subunit 3 family.

The protein resides in the mitochondrion membrane. The catalysed reaction is a ubiquinone + NADH + 5 H(+)(in) = a ubiquinol + NAD(+) + 4 H(+)(out). Core subunit of the mitochondrial membrane respiratory chain NADH dehydrogenase (Complex I) that is believed to belong to the minimal assembly required for catalysis. Complex I functions in the transfer of electrons from NADH to the respiratory chain. The immediate electron acceptor for the enzyme is believed to be ubiquinone. The polypeptide is NADH-ubiquinone oxidoreductase chain 3 (ND3) (Cyanidium caldarium (Red alga)).